The sequence spans 277 residues: MSKEDKEKTQIIDKDLDLSNAGRGVWLVKVPKYIAQKWEKAPTNMDVGKLRINKTPGQKAQVSLSLTPAVLALDPEEKIPTEHILDVSQVTKQTLGVFSHMAPSDGKENSTTSAAQPDNEKLYMEGRIVQKLECRPIADNCYMKLKLESIRKASEPQRRVQPIDKIVQNFKPVKDHAHNIEYRERKKAEGKKARDDKNAVMDMLFHAFEKHQYYNIKDLVKITNQPISYLKEILKDVCDYNMKNPHKNMWELKKEYRHYKTEEKKEEEHKSGSSDSE.

This sequence belongs to the TFIIF beta subunit family. Heterodimer of an alpha and a beta subunit.

Its subcellular location is the nucleus. In terms of biological role, TFIIF is a general transcription initiation factor that binds to RNA polymerase II and helps to recruit it to the initiation complex in collaboration with TFIIB. The sequence is that of General transcription factor IIF subunit 2 (TfIIFbeta) from Drosophila melanogaster (Fruit fly).